The sequence spans 314 residues: Olfactory receptor 5D13 (314 aa).

The Extracellular segment spans residues 1–27; sequence MMASERNQSSTPTFILLGFSEYPEIQV. An N-linked (GlcNAc...) asparagine glycan is attached at Asn-7. The chain crosses the membrane as a helical span at residues 28-48; sequence PLFLVFLFVYTVTVVGNLGMI. Residues 49 to 56 are Cytoplasmic-facing; it reads IIIRLNSK. The chain crosses the membrane as a helical span at residues 57 to 77; sequence LHTIMCFFLSHLSLTDFCFST. Topologically, residues 78-101 are extracellular; it reads VVTPKLLENLVVEYRTISFSGCIM. A helical transmembrane segment spans residues 102–122; that stretch reads QFCFACIFGVTETFMLAAMAY. Over 123-141 the chain is Cytoplasmic; the sequence is DRFVAVCKPLLYTTIMSQK. Residues 142-162 form a helical membrane-spanning segment; that stretch reads LCALLVAGSYTWGIVCSLILT. Topologically, residues 163–198 are extracellular; that stretch reads YFLLDLSFCESTFINNFICDHSVIVSASYSDPYISQ. A helical membrane pass occupies residues 199–219; it reads RLCFIIAIFNEVSSLIIILTS. The Cytoplasmic segment spans residues 220–239; sequence YMLIFTTIMKMRSASGRQKT. Residues 240–260 form a helical membrane-spanning segment; the sequence is FSTCASHLTAITIFHGTILFL. The Extracellular portion of the chain corresponds to 261-273; it reads YCVPNPKTSSLIV. The chain crosses the membrane as a helical span at residues 274 to 294; sequence TVASVFYTVAIPMLNPLIYSL. The Cytoplasmic segment spans residues 295 to 314; it reads RNKDINNMFEKLVVTKLIYH.

This sequence belongs to the G-protein coupled receptor 1 family.

It is found in the cell membrane. Odorant receptor. The chain is Olfactory receptor 5D13 (OR5D13) from Homo sapiens (Human).